We begin with the raw amino-acid sequence, 450 residues long: Deoxyguanosinetriphosphate triphosphohydrolase-like protein (450 aa).

The HD domain maps to 61–201; sequence RLTHSLEVAQ…AKLAPELNAD (141 aa).

The protein belongs to the dGTPase family. Type 2 subfamily.

This chain is Deoxyguanosinetriphosphate triphosphohydrolase-like protein, found in Pasteurella multocida (strain Pm70).